A 299-amino-acid chain; its full sequence is HTH-type transcriptional regulator CynR (299 aa).

One can recognise an HTH lysR-type domain in the interval 1–58 (MLSRHINYFLAVAEHGSFTRAASALHVSQPALSQQIRQLEESLGVPLFDRSGRTIRLT). Residues 18 to 37 (FTRAASALHVSQPALSQQIR) constitute a DNA-binding region (H-T-H motif).

It belongs to the LysR transcriptional regulatory family.

The protein resides in the cytoplasm. In terms of biological role, positively regulates the cynTSX operon, and negatively regulates its own transcription. Binds specifically to the cynR-cynTSX intergenic region. The chain is HTH-type transcriptional regulator CynR (cynR) from Escherichia coli (strain K12).